Consider the following 684-residue polypeptide: Methionine--tRNA ligase (684 aa).

Residues 15-25 (PYANGAIHLGH) carry the 'HIGH' region motif. Cys-146, Cys-149, Cys-159, and Cys-162 together coordinate Zn(2+). The short motif at 331–335 (KMSKS) is the 'KMSKS' region element. Lys-334 is a binding site for ATP. The region spanning 582–684 (DFAKLDLRVA…SGVTAGMQVR (103 aa)) is the tRNA-binding domain.

Belongs to the class-I aminoacyl-tRNA synthetase family. MetG type 1 subfamily. Homodimer. Zn(2+) is required as a cofactor.

It localises to the cytoplasm. The catalysed reaction is tRNA(Met) + L-methionine + ATP = L-methionyl-tRNA(Met) + AMP + diphosphate. Is required not only for elongation of protein synthesis but also for the initiation of all mRNA translation through initiator tRNA(fMet) aminoacylation. The polypeptide is Methionine--tRNA ligase (Glaesserella parasuis serovar 5 (strain SH0165) (Haemophilus parasuis)).